The sequence spans 965 residues: Argonaute protein wago-4 (965 aa).

The tract at residues 1 to 34 (MPALPPVYTPSGAPSSVHAPPAVPPVPVPTQPLR) is disordered. Low complexity predominate over residues 10 to 20 (PSGAPSSVHAP). Pro residues predominate over residues 21 to 30 (PAVPPVPVPT). In terms of domain architecture, PAZ spans 318–428 (PILDKLKEIT…YPMELLKISS (111 aa)). Positions 594-924 (TFVFIITDDS…YAKRGRNLWN (331 aa)) constitute a Piwi domain.

Belongs to the argonaute family. WAGO subfamily. Interacts with znfx-1; the interaction promotes the transmission of epigenetic information across generations. May interact with mina-1. Expressed in the hermaphrodite germline and in oocytes. Expressed at a low level in the male germline. Not expressed in the soma of hermaphrodites or males.

Its subcellular location is the cytoplasm. The protein resides in the perinuclear region. The protein localises to the cytoplasmic granule. In terms of biological role, argonaute protein which is involved in the endogenous small interfering RNA (endo-siRNA) pathway and is required for RNA-mediated gene silencing (RNAi) in the germline. Interacts with secondary 22G-RNAs, which are RNA-dependent RNA polymerase-derived endo-siRNAs, typically 22 nucleotides in length with a 5'guanosine residue. Also interacts with the mRNA targets of 22G-RNAs. Associates with znfx-1 to mediate small RNA-directed transgenerational epigenetic inheritance of both germline- and soma-expressed genes. The protein is Argonaute protein wago-4 of Caenorhabditis elegans.